The following is an 88-amino-acid chain: Small ribosomal subunit protein bS20 (88 aa).

This sequence belongs to the bacterial ribosomal protein bS20 family.

Its function is as follows. Binds directly to 16S ribosomal RNA. The chain is Small ribosomal subunit protein bS20 from Maricaulis maris (strain MCS10) (Caulobacter maris).